Here is a 149-residue protein sequence, read N- to C-terminus: uncharacterized protein (149 aa).

This sequence to Rhizobium NGR234A y4oM.

This is an uncharacterized protein from Sinorhizobium fredii (strain NBRC 101917 / NGR234).